The following is a 214-amino-acid chain: Phosphatidylcholine transfer protein (214 aa).

N-acetylmethionine is present on M1. The START domain maps to 1 to 212; it reads MAGPAAHFSD…MVKACQNYHK (212 aa). A 1,2-diacyl-sn-glycero-3-phosphocholine is bound by residues Y72 and R78. At S139 the chain carries Phosphoserine. Q157 contacts a 1,2-diacyl-sn-glycero-3-phosphocholine.

Interacts with ACOT13/THEM2.

Its subcellular location is the cytoplasm. In terms of biological role, lipid transfer protein that promotes intermembrane transfer of phosphatidylcholines but no other phospholipids. Binds a single lipid molecule. May play a role in hepatocellular selection and transport of phosphatidylcholines during bile formation. This Rattus norvegicus (Rat) protein is Phosphatidylcholine transfer protein (Pctp).